Here is a 148-residue protein sequence, read N- to C-terminus: Large ribosomal subunit protein bL9 (148 aa).

It belongs to the bacterial ribosomal protein bL9 family.

Functionally, binds to the 23S rRNA. The chain is Large ribosomal subunit protein bL9 from Caldicellulosiruptor bescii (strain ATCC BAA-1888 / DSM 6725 / KCTC 15123 / Z-1320) (Anaerocellum thermophilum).